Reading from the N-terminus, the 442-residue chain is NADH-quinone oxidoreductase subunit D (442 aa).

This sequence belongs to the complex I 49 kDa subunit family. As to quaternary structure, NDH-1 is composed of 14 different subunits. Subunits NuoB, C, D, E, F, and G constitute the peripheral sector of the complex.

It localises to the cell membrane. The enzyme catalyses a quinone + NADH + 5 H(+)(in) = a quinol + NAD(+) + 4 H(+)(out). Functionally, NDH-1 shuttles electrons from NADH, via FMN and iron-sulfur (Fe-S) centers, to quinones in the respiratory chain. The immediate electron acceptor for the enzyme in this species is believed to be a menaquinone. Couples the redox reaction to proton translocation (for every two electrons transferred, four hydrogen ions are translocated across the cytoplasmic membrane), and thus conserves the redox energy in a proton gradient. The chain is NADH-quinone oxidoreductase subunit D from Mycolicibacterium vanbaalenii (strain DSM 7251 / JCM 13017 / BCRC 16820 / KCTC 9966 / NRRL B-24157 / PYR-1) (Mycobacterium vanbaalenii).